Reading from the N-terminus, the 588-residue chain is MEVIHGRPYCCRELEGADILSNTFYSNGLHTPYETTIRPTASEDRYQELRQALPQCRLRWGADREYGGMLPVSLPEEHRPKCEPPRLMSKGHQHYGFGGEIWPKKLPIEQYYYLTQNKKSDLYGNDSLLPKPPNSTVGEICSSYPIEHPYHTHISRGAMFPAFTSPKDLYTGVKARTQQPFPPTLPTKTYDSTILKTRGNPYRYELLDLPTDSKKKALTWPGQSVYYDFPKCVEKNKPVFYPKPPKTFAPNSSVTPWDTMTSAKDANIQRNLERSHWLTSYTHDFTGLGPMSPLELDDYREKELAELTGQIGFDPQPQEKFHPSLKPPRPLDGRIARLIQNQRPLEATVQIPPSCPDCTPRVLCAFHTFIPSSAEMMAMNDHLLSGLTHKNQNIEDKIKEEQRLLSTYALPSSYESKDMGSLFDLHSLPKITDTKKSDDLYWRQLDVKPLPIARSKSNHYIDYEPHKSTYRDPYAMCLNPVRLSKSNILQNKTDMADLTFDNYLRKPEFLGTDIESSDETRPLLNWISRAGVPKHHTNFRDFKNSFSRSMAHKRLHNSIQEEQKDLRDKLQCGMRHQFYGHNSHYFYN.

Phosphothreonine is present on T219. 5 positions are modified to phosphoserine: S224, S406, S421, S427, and S437. Residue Y441 is modified to Phosphotyrosine. Phosphoserine is present on residues S457 and S484. T512 bears the Phosphothreonine mark. The residue at position 516 (S516) is a Phosphoserine. K543 participates in a covalent cross-link: Glycyl lysine isopeptide (Lys-Gly) (interchain with G-Cter in SUMO2). S545 is subject to Phosphoserine.

It is found in the cytoplasm. Its subcellular location is the cytoskeleton. The protein localises to the microtubule organizing center. The protein resides in the centrosome. It localises to the flagellum axoneme. In terms of biological role, microtubule inner protein (MIP) part of the dynein-decorated doublet microtubules (DMTs) in flagellum axoneme. May serve to reinforce and thus stabilize the microtubule structure in the sperm flagella. The protein is Sperm-associated microtubule inner protein 4 (Spmip4) of Rattus norvegicus (Rat).